We begin with the raw amino-acid sequence, 248 residues long: Clathrin light chain A (248 aa).

Positions 1–92 (MAELDPFGAP…YYQESNGPTD (92 aa)) are disordered. Gly residues predominate over residues 13–25 (APGGPALGNGVAG). The segment covering 61–71 (GPQPHGEPPGG) has biased composition (pro residues). Residues 100–162 (VDRLQSEPES…QLQKTKANNR (63 aa)) form an involved in binding clathrin heavy chain region. S105 and S206 each carry phosphoserine. K223 carries the post-translational modification N6-acetyllysine. S236 is subject to Phosphoserine. K242 is subject to N6-acetyllysine.

Belongs to the clathrin light chain family. Clathrin coats are formed from molecules containing 3 heavy chains and 3 light chains. Interacts with CALY; the interaction stimulates clathrin self-assembly and clathrin-mediated endocytosis. Interacts with CKAP5 and TACC3 forming the TACC3/ch-TOG/clathrin complex located at spindle inter-microtubules bridges; the complex implicates clathrin triskelions.

The protein localises to the cytoplasmic vesicle membrane. Its subcellular location is the membrane. The protein resides in the coated pit. It is found in the cytoplasm. It localises to the cytoskeleton. The protein localises to the spindle. In terms of biological role, clathrin is the major protein of the polyhedral coat of coated pits and vesicles. Acts as a component of the TACC3/ch-TOG/clathrin complex proposed to contribute to stabilization of kinetochore fibers of the mitotic spindle by acting as inter-microtubule bridge. The polypeptide is Clathrin light chain A (CLTA) (Homo sapiens (Human)).